The chain runs to 228 residues: Caspase recruitment domain-containing protein 19 (228 aa).

Cysteine 7 and cysteine 77 are disulfide-bonded. A CARD domain is found at 8-99 (DRLVQDTPFL…PLHSRLPSRH (92 aa)). Valine 113 bears the Phosphoserine mark.

Associates with BCL10 by CARD-CARD interaction. Expressed in ovary, testis, placenta, skeletal muscle, kidney, lung, heart and liver (at protein level). Expressed in thymus and brain.

It localises to the nucleus. The protein resides in the endoplasmic reticulum membrane. Its subcellular location is the mitochondrion membrane. Functionally, plays a role in inhibiting the effects of BCL10-induced activation of NF-kappa-B. May inhibit the phosphorylation of BCL10 in a CARD-dependent manner. In Homo sapiens (Human), this protein is Caspase recruitment domain-containing protein 19 (CARD19).